The primary structure comprises 543 residues: Kelch repeat and BTB domain-containing protein 4 (543 aa).

One can recognise a BTB domain in the interval 70–137 (ADVTISVEGR…IYHGTVKLRA (68 aa)). The BACK domain occupies 172-264 (CLQVMWLADR…SLKEIGENVH (93 aa)). Kelch repeat units lie at residues 264 to 310 (HIYL…KHGG), 311 to 353 (DLYV…SVPG), 356 to 403 (AIYS…NLNG), 405 to 455 (IYLL…VHKD), and 457 to 505 (VFIV…YVFR).

In terms of assembly, component of the BCR(KBTBD4) E3 ubiquitin ligase complex, at least composed of CUL3, KBTBD4 and RBX1.

Its function is as follows. Substrate-specific adapter of a BCR (BTB-CUL3-RBX1) E3 ubiquitin ligase complex which targets CoREST corepressor complex components RCOR1, KDM1A/LSD1 and HDAC2 for proteasomal degradation. RCOR1 is likely to be the primary target while degradation of KDM1A and HDAC2 is likely due to their association with RCOR1. Also targets RCOR3, MIER2 and MIER3 for proteasomal degradation as well as associated proteins ZNF217 and RREB1. Degradation is dependent on the presence of an ELM2 domain in the target proteins. The protein is Kelch repeat and BTB domain-containing protein 4 (KBTBD4) of Macaca fascicularis (Crab-eating macaque).